The sequence spans 244 residues: Ribonuclease PH (244 aa).

Phosphate-binding positions include R90 and 128-130 (GTR).

The protein belongs to the RNase PH family. In terms of assembly, homohexameric ring arranged as a trimer of dimers.

The enzyme catalyses tRNA(n+1) + phosphate = tRNA(n) + a ribonucleoside 5'-diphosphate. Phosphorolytic 3'-5' exoribonuclease that plays an important role in tRNA 3'-end maturation. Removes nucleotide residues following the 3'-CCA terminus of tRNAs; can also add nucleotides to the ends of RNA molecules by using nucleoside diphosphates as substrates, but this may not be physiologically important. Probably plays a role in initiation of 16S rRNA degradation (leading to ribosome degradation) during starvation. The sequence is that of Ribonuclease PH from Prochlorococcus marinus (strain MIT 9313).